Reading from the N-terminus, the 1186-residue chain is DNA-directed RNA polymerase subunit beta (1186 aa).

The tract at residues 1149–1186 (KEEDDDPSTSSDDLGFNIGARPDAAAKEDQVAEEPEFQ) is disordered.

It belongs to the RNA polymerase beta chain family. The RNAP catalytic core consists of 2 alpha, 1 beta, 1 beta' and 1 omega subunit. When a sigma factor is associated with the core the holoenzyme is formed, which can initiate transcription.

It carries out the reaction RNA(n) + a ribonucleoside 5'-triphosphate = RNA(n+1) + diphosphate. DNA-dependent RNA polymerase catalyzes the transcription of DNA into RNA using the four ribonucleoside triphosphates as substrates. The polypeptide is DNA-directed RNA polymerase subunit beta (Bifidobacterium adolescentis (strain ATCC 15703 / DSM 20083 / NCTC 11814 / E194a)).